The chain runs to 69 residues: Large ribosomal subunit protein bL28 (69 aa).

A disordered region spans residues 1 to 27 (MSRRCSVSGKGPLVGNNVSHANNKTKR).

This sequence belongs to the bacterial ribosomal protein bL28 family.

This chain is Large ribosomal subunit protein bL28, found in Sulfurovum sp. (strain NBC37-1).